Here is a 298-residue protein sequence, read N- to C-terminus: MLETKDPAIKLFGMKIPFPTVLEVADEEEEKNQNKTLTDQSEKDKTLKKPTKILPCPRCNSMETKFCYYNNYNVNQPRHFCKACQRYWTSGGTMRSVPIGAGRRKNKNNSPTSHYHHVTISETNGPVLSFSLGDDQKVSSNRFGNQKLVARIENNDERSNNNTSNGLNCFPGVSWPYTWNPAFYPVYPYWSMPVLSSPVSSSPTSTLGKHSRDEDETVKQKQRNGSVLVPKTLRIDDPNEAAKSSIWTTLGIKNEVMFNGFGSKKEVKLSNKEETETSLVLCANPAALSRSINFHEQM.

Residues 27–46 form a disordered region; sequence EEEEKNQNKTLTDQSEKDKT. The segment at 54–108 adopts a Dof-type zinc-finger fold; the sequence is LPCPRCNSMETKFCYYNNYNVNQPRHFCKACQRYWTSGGTMRSVPIGAGRRKNKN. Zn(2+) is bound by residues cysteine 56, cysteine 59, cysteine 81, and cysteine 84. Residues 200 to 231 are disordered; it reads SSSPTSTLGKHSRDEDETVKQKQRNGSVLVPK. Residues 210-219 are compositionally biased toward basic and acidic residues; sequence HSRDEDETVK.

As to quaternary structure, interacts with ADO2 (via kelch repeats), ADO3 (via kelch repeats) and GI (via N-terminus). Post-translationally, ubiquitinated. As to expression, expressed in the vascular tissues of cotyledons, leaves and hypocotyls and in stomata. Not detected in roots.

It is found in the nucleus. Functionally, transcription factor that binds specifically to a 5'-AA[AG]G-3' consensus core sequence. A flanking TGT sequence contributes to the specificity of binding. Regulates a photoperiodic flowering response. Transcriptional repressor of 'CONSTANS' expression. The DNA-binding ability is not modulated by 'GIGANTEA' but the stability of CDF1 is controlled by the proteasome-dependent pathway. Ubiquitinated by the SCF(ADO3) E3 ubiquitin ligase complex. Binds to the FT promoter in the morning. This is Cyclic dof factor 1 (CDF1) from Arabidopsis thaliana (Mouse-ear cress).